Here is a 70-residue protein sequence, read N- to C-terminus: Conotoxin ArMKLT2-0111 (70 aa).

Positions 1-22 (MKLTCVLIIAVLFLTACQLTTG) are cleaved as a signal peptide. The propeptide occupies 23–40 (EQKDHALRSTDKNSKLTR). Residue Q41 is modified to Pyrrolidone carboxylic acid. Intrachain disulfides connect C42-C56, C49-C60, and C55-C67.

It belongs to the conotoxin O1 superfamily. Expressed by the venom duct.

The protein resides in the secreted. The protein is Conotoxin ArMKLT2-0111 of Conus arenatus (Sand-dusted cone).